We begin with the raw amino-acid sequence, 216 residues long: Glycerol-3-phosphate acyltransferase (216 aa).

The next 5 membrane-spanning stretches (helical) occupy residues 4–24 (IALG…AILV), 56–76 (VAVL…AYLL), 80–100 (PLYL…PVFF), 112–132 (FGAI…TWLL), and 138–158 (GYSS…VWWF).

The protein belongs to the PlsY family. Probably interacts with PlsX.

Its subcellular location is the cell inner membrane. The catalysed reaction is an acyl phosphate + sn-glycerol 3-phosphate = a 1-acyl-sn-glycero-3-phosphate + phosphate. The protein operates within lipid metabolism; phospholipid metabolism. In terms of biological role, catalyzes the transfer of an acyl group from acyl-phosphate (acyl-PO(4)) to glycerol-3-phosphate (G3P) to form lysophosphatidic acid (LPA). This enzyme utilizes acyl-phosphate as fatty acyl donor, but not acyl-CoA or acyl-ACP. In Yersinia pseudotuberculosis serotype O:1b (strain IP 31758), this protein is Glycerol-3-phosphate acyltransferase.